Here is a 453-residue protein sequence, read N- to C-terminus: Sensor histidine kinase CpxA (453 aa).

Topologically, residues 1-4 are cytoplasmic; that stretch reads MTAR. A helical transmembrane segment spans residues 5-25; the sequence is IFAIFWLTLALVLMLVLMLPK. At 26 to 159 the chain is on the periplasmic side; sequence LDSRQMTELL…SDFINLLFDR (134 aa). A helical membrane pass occupies residues 160–180; that stretch reads PLLLLIVTMLVSAPLLLWLAW. One can recognise an HAMP domain in the interval 180–233; that stretch reads WSLAKPARKLKNAADEVAQGNLRQHPELEAGPQEFLAAGASFNQMVTALERMMT. Topologically, residues 181–453 are cytoplasmic; the sequence is SLAKPARKLK…TIWLPLYKRT (273 aa). In terms of domain architecture, Histidine kinase spans 241–451; the sequence is DISHELRTPL…RLTIWLPLYK (211 aa). The Nucleophile role is filled by histidine 244. Histidine 244 carries the post-translational modification Phosphohistidine; by autocatalysis. ATP-binding positions include 244 to 247, 355 to 360, aspartate 382, 401 to 402, and 412 to 417; these read HELR, RNALRY, RT, and GTGLGL.

Interacts with cognate response regulator CpxR.

The protein localises to the cell inner membrane. The catalysed reaction is ATP + protein L-histidine = ADP + protein N-phospho-L-histidine.. Its activity is regulated as follows. The two-component system is activated by envelope stress such as overexpression of some (misfolded) periplasmic proteins. In terms of biological role, histidine kinase member of the two-component regulatory system CpxA/CpxR which responds to envelope stress response by activating or, in some cases, repressing expression of downstream genes. Activates CpxR by phosphorylation. The polypeptide is Sensor histidine kinase CpxA (Klebsiella pneumoniae subsp. pneumoniae (strain HS11286)).